A 751-amino-acid polypeptide reads, in one-letter code: Catalase-peroxidase (751 aa).

Residues 1-24 (MADKCPFHNQAPKPNVAGSGTQNR) form a disordered region. A cross-link (tryptophyl-tyrosyl-methioninium (Trp-Tyr) (with M-267)) is located at residues 95 to 241 (WHSAGTYRTF…LAAAHMGLIY (147 aa)). The active-site Proton acceptor is the histidine 96. The tryptophyl-tyrosyl-methioninium (Tyr-Met) (with W-95) cross-link spans 241-267 (YVNPEGPDGNPDPVAAARDIRTTFARM). A heme b-binding site is contributed by histidine 282.

It belongs to the peroxidase family. Peroxidase/catalase subfamily. Homodimer or homotetramer. Heme b serves as cofactor. In terms of processing, formation of the three residue Trp-Tyr-Met cross-link is important for the catalase, but not the peroxidase activity of the enzyme.

It is found in the cytoplasm. The enzyme catalyses H2O2 + AH2 = A + 2 H2O. It catalyses the reaction 2 H2O2 = O2 + 2 H2O. In terms of biological role, bifunctional enzyme with both catalase and broad-spectrum peroxidase activity. In Aspergillus oryzae (strain ATCC 42149 / RIB 40) (Yellow koji mold), this protein is Catalase-peroxidase.